A 218-amino-acid chain; its full sequence is tRNA (guanine-N(7)-)-methyltransferase (218 aa).

E46, E71, D98, and D120 together coordinate S-adenosyl-L-methionine. D120 is an active-site residue. Substrate is bound at residue K124. The tract at residues 126–131 is interaction with RNA; the sequence is RHEKRR. Residues D156 and 196 to 199 contribute to the substrate site; that span reads TEYE.

It belongs to the class I-like SAM-binding methyltransferase superfamily. TrmB family.

It carries out the reaction guanosine(46) in tRNA + S-adenosyl-L-methionine = N(7)-methylguanosine(46) in tRNA + S-adenosyl-L-homocysteine. Its pathway is tRNA modification; N(7)-methylguanine-tRNA biosynthesis. In terms of biological role, catalyzes the formation of N(7)-methylguanine at position 46 (m7G46) in tRNA. The sequence is that of tRNA (guanine-N(7)-)-methyltransferase from Lactobacillus johnsonii (strain CNCM I-12250 / La1 / NCC 533).